A 310-amino-acid polypeptide reads, in one-letter code: MEAPPEHCPGVESEQAGRVSACAGCPNQSICSDPNKKLEDPGKALVAAALKDVKHKLLILSGKGGVGKSTVTTLLTRYLARSCPDNNFGVLDIDICGPSQPRLLGAVGENVHQSGSGWSPVGIDDNVCLMSIGFLLGSVDDAIIWRGPKKNGMIRQFLSEVDWGNLDLLLLDTPPGTSDEHLSVVSYLKNDEIPNSVRAIIVTTPQEVALLDVRKEINFCKKQGIPIVGVVENMSSFRCGHCGNSSEIFPAKTGGAAAMCTEMEVPLLGSLPLDPLIAKACDSGEDITAMKNPTTEALAAICTRIMDSFN.

[4Fe-4S] cluster contacts are provided by Cys8, Cys22, Cys25, and Cys31. 62–69 (GKGGVGKS) contributes to the ATP binding site. Residues Cys239 and Cys242 each contribute to the [4Fe-4S] cluster site.

Belongs to the Mrp/NBP35 ATP-binding proteins family. NUBP1/NBP35 subfamily. In terms of assembly, heterotetramer of 2 Nubp1 and 2 Nubp2 chains. [4Fe-4S] cluster is required as a cofactor.

Its subcellular location is the cytoplasm. Functionally, component of the cytosolic iron-sulfur (Fe/S) protein assembly (CIA) machinery. Required for maturation of extramitochondrial Fe-S proteins. The Nubp1-Nubp2 heterotetramer forms a Fe-S scaffold complex, mediating the de novo assembly of an Fe-S cluster and its transfer to target apoproteins. In Drosophila willistoni (Fruit fly), this protein is Cytosolic Fe-S cluster assembly factor Nubp1 homolog.